The primary structure comprises 590 residues: MAGAAPGAIMDEDYYGSAAEWGDEADGGQQEDDSGEGEDDAEVQQECLHKFSTRDYIMEPSIFNTLKRYFQAGGSPENVIQLLSENYTAVAQTVNLLAEWLIQTGVEPVQVQETVENHLKSLLIKHFDPRKADSIFTEEGETPAWLEQMIAHTTWRDLFYKLAEAHPDCLMLNFTVKLISDAGYQGEITSVSTACQQLEVFSRVLRTSLATILDGGEENLEKNLPEFAKMVCHGEHTYLFAQAMMSVLAQEEQGGSAVRRIAQEVQRFAQEKGHDASQITLALGTAASYPRACQALGAMLSKGALNPADITVLFKMFTSMDPPPVELIRVPAFLDLFMQSLFKPGARINQDHKHKYIHILAYAASVVETWKKNKRVSINKDELKSTSKAVETVHNLCCNENKGASELVAELSTLYQCIRFPVVAMGVLKWVDWTVSEPRYFQLQTDHTPVHLALLDEISTCHQLLHPQVLQLLVKLFETEHSQLDVMEQLELKKTLLDRMVHLLSRGYVLPVVSYIRKCLEKLDTDISLIRYFVTEVLDVIAPPYTSDFVQLFLPILENDSIAGTIKTEGEHDPVTEFIAHCKSNFIMVN.

Residues 15–43 (YGSAAEWGDEADGGQQEDDSGEGEDDAEV) form a disordered region. Positions 21–43 (WGDEADGGQQEDDSGEGEDDAEV) are enriched in acidic residues.

It belongs to the NELF-D family. As to quaternary structure, the NELF complex is composed of NELFA, NELFB, NELFCD and NELFE; NELFA and NELFCD form a stable subcomplex that binds primarily through NELFCD to the N-terminus of NELFB. Binds RNA which may help to stabilize the NELF complex on nucleic acid. In vitro, the NELFA:NELFCD subcomplex binds to ssDNA and ssRNA in a sequence- and structure-dependent manner. Interacts with ARAF1. Interacts with PCF11. Interacts with NELFB. Interacts with KAT8.

The protein resides in the nucleus. Functionally, essential component of the NELF complex, a complex that negatively regulates the elongation of transcription by RNA polymerase II. The NELF complex, which acts via an association with the DSIF complex and causes transcriptional pausing, is counteracted by the P-TEFb kinase complex. The sequence is that of Negative elongation factor D (NELFCD) from Pongo abelii (Sumatran orangutan).